Here is a 352-residue protein sequence, read N- to C-terminus: Probable protein phosphatase 2C 42 (352 aa).

Positions 26-321 constitute a PPM-type phosphatase domain; that stretch reads AYASSAMQGY…DNMSVILVRF (296 aa). D62, G63, D267, and D312 together coordinate Mn(2+). The segment at 328–352 is disordered; the sequence is RGARAATSSTSTGTVPSRHSKSISL. Residues 329–341 show a composition bias toward low complexity; the sequence is GARAATSSTSTGT.

This sequence belongs to the PP2C family. Mg(2+) serves as cofactor. Requires Mn(2+) as cofactor.

The catalysed reaction is O-phospho-L-seryl-[protein] + H2O = L-seryl-[protein] + phosphate. It carries out the reaction O-phospho-L-threonyl-[protein] + H2O = L-threonyl-[protein] + phosphate. This chain is Probable protein phosphatase 2C 42, found in Oryza sativa subsp. japonica (Rice).